The chain runs to 433 residues: Adenylosuccinate synthetase (433 aa).

GTP-binding positions include 11 to 17 (GDEGKGK) and 39 to 41 (GHT). Catalysis depends on aspartate 12, which acts as the Proton acceptor. Mg(2+)-binding residues include aspartate 12 and glycine 39. IMP is bound by residues 12 to 15 (DEGK), 37 to 40 (NAGH), threonine 134, arginine 148, asparagine 230, threonine 245, and arginine 309. Histidine 40 acts as the Proton donor in catalysis. 305–311 (VTTGRKR) is a binding site for substrate. Residues arginine 311, 337–339 (KLD), and 419–421 (GTG) contribute to the GTP site.

Belongs to the adenylosuccinate synthetase family. As to quaternary structure, homodimer. Requires Mg(2+) as cofactor.

It localises to the cytoplasm. The catalysed reaction is IMP + L-aspartate + GTP = N(6)-(1,2-dicarboxyethyl)-AMP + GDP + phosphate + 2 H(+). It functions in the pathway purine metabolism; AMP biosynthesis via de novo pathway; AMP from IMP: step 1/2. Plays an important role in the de novo pathway and in the salvage pathway of purine nucleotide biosynthesis. Catalyzes the first committed step in the biosynthesis of AMP from IMP. This Saccharomyces cerevisiae (strain AWRI1631) (Baker's yeast) protein is Adenylosuccinate synthetase.